The sequence spans 228 residues: Nucleolar protein 12 (228 aa).

Residues 1–22 (MGKSDRLQQGSKGKGGGKRKHG) are disordered. Residues 40–103 (FHKRKLERRR…AITATTECVQ (64 aa)) are a coiled coil. Basic and acidic residues predominate over residues 126–145 (LLEPAQRDGGDGEERERTEA). The interval 126 to 228 (LLEPAQRDGG…QTGRNERSQD (103 aa)) is disordered. Over residues 158–170 (KIQSLTASLNSLV) the composition is skewed to polar residues. The span at 171-180 (KQKKRRKQKR) shows a compositional bias: basic residues. Over residues 181-195 (RQEAKQRSHQSDRKS) the composition is skewed to basic and acidic residues. The segment covering 204-220 (NKQKQGKSTKRQRRRQT) has biased composition (basic residues).

This sequence belongs to the RRP17 family.

The protein resides in the nucleus. It localises to the nucleolus. Its function is as follows. May bind to rRNA. This is Nucleolar protein 12 (nol12) from Danio rerio (Zebrafish).